The sequence spans 452 residues: Protein EARLY-RESPONSIVE TO DEHYDRATION 7, chloroplastic (452 aa).

Polar residues predominate over residues Met-1–Thr-18. Residues Met-1 to Ser-28 constitute a chloroplast transit peptide. The interval Met-1–Tyr-37 is disordered. The span at Ser-19–Tyr-37 shows a compositional bias: low complexity. The Senescence domain occupies Ile-258–Ala-426.

It localises to the plastid. Its subcellular location is the chloroplast. The protein is Protein EARLY-RESPONSIVE TO DEHYDRATION 7, chloroplastic of Arabidopsis thaliana (Mouse-ear cress).